Consider the following 245-residue polypeptide: Small ribosomal subunit protein uS3 (245 aa).

In terms of domain architecture, KH type-2 spans 39–111 (IRNFINKNYS…EVFFNVIEIK (73 aa)).

Belongs to the universal ribosomal protein uS3 family. Part of the 30S ribosomal subunit. Forms a tight complex with proteins S10 and S14.

Binds the lower part of the 30S subunit head. Binds mRNA in the 70S ribosome, positioning it for translation. The chain is Small ribosomal subunit protein uS3 from Phytoplasma mali (strain AT).